We begin with the raw amino-acid sequence, 211 residues long: LexA repressor (211 aa).

The segment at residues 31–51 (RAEISKELGFRSPNAAEEHLK) is a DNA-binding region (H-T-H motif). Active-site for autocatalytic cleavage activity residues include Ser-127 and Lys-164.

The protein belongs to the peptidase S24 family. Homodimer.

The catalysed reaction is Hydrolysis of Ala-|-Gly bond in repressor LexA.. Represses a number of genes involved in the response to DNA damage (SOS response), including recA and lexA. In the presence of single-stranded DNA, RecA interacts with LexA causing an autocatalytic cleavage which disrupts the DNA-binding part of LexA, leading to derepression of the SOS regulon and eventually DNA repair. The sequence is that of LexA repressor from Pasteurella multocida (strain Pm70).